The sequence spans 398 residues: Succinate--CoA ligase [ADP-forming] subunit beta (398 aa).

The ATP-grasp domain occupies 9–254; it reads KAVLREFGVP…ESEEDAKEIE (246 aa). ATP contacts are provided by residues K46, 53–55, E109, S112, and E117; that span reads GRG. Residues N209 and D223 each coordinate Mg(2+). Substrate is bound by residues N274 and 331 to 333; that span reads GIM.

Belongs to the succinate/malate CoA ligase beta subunit family. As to quaternary structure, heterotetramer of two alpha and two beta subunits. Mg(2+) serves as cofactor.

The catalysed reaction is succinate + ATP + CoA = succinyl-CoA + ADP + phosphate. It carries out the reaction GTP + succinate + CoA = succinyl-CoA + GDP + phosphate. It participates in carbohydrate metabolism; tricarboxylic acid cycle; succinate from succinyl-CoA (ligase route): step 1/1. Its function is as follows. Succinyl-CoA synthetase functions in the citric acid cycle (TCA), coupling the hydrolysis of succinyl-CoA to the synthesis of either ATP or GTP and thus represents the only step of substrate-level phosphorylation in the TCA. The beta subunit provides nucleotide specificity of the enzyme and binds the substrate succinate, while the binding sites for coenzyme A and phosphate are found in the alpha subunit. This Rhodopseudomonas palustris (strain HaA2) protein is Succinate--CoA ligase [ADP-forming] subunit beta.